The sequence spans 405 residues: Protochlorophyllide reductase A, chloroplastic (405 aa).

The transit peptide at methionine 1–alanine 69 directs the protein to the chloroplast.

This sequence belongs to the short-chain dehydrogenases/reductases (SDR) family. POR subfamily. Forms large complexes including TOC33, pPORA and OEP161 during pPORA import into plastids at the plastid envelope membrane. Interacts with CPP1 during plastid import. Expressed in young seedlings. Not detected in leaves.

Its subcellular location is the plastid. It localises to the chloroplast. It catalyses the reaction chlorophyllide a + NADP(+) = protochlorophyllide a + NADPH + H(+). It functions in the pathway porphyrin-containing compound metabolism; chlorophyll biosynthesis. In terms of biological role, phototransformation of protochlorophyllide (Pchlide) to chlorophyllide (Chlide). PORA may also function as a photoprotectant during the transitory stage from dark to light. Functions in skotomorphogenesis, photomorphogenesis and throughout the plant life under specific light conditions. The protein is Protochlorophyllide reductase A, chloroplastic (PORA) of Arabidopsis thaliana (Mouse-ear cress).